Here is a 528-residue protein sequence, read N- to C-terminus: UDP-glucuronosyltransferase 2B19 (528 aa).

An N-terminal signal peptide occupies residues 1 to 21 (MSMKWTSALLLIQLSCYLSFG). An N6-succinyllysine modification is found at Lys135. A glycan (N-linked (GlcNAc...) asparagine) is linked at Asn315. The helical transmembrane segment at 493 to 513 (VIGFLLACVATVIFIITKCLF) threads the bilayer.

Belongs to the UDP-glycosyltransferase family. Expressed in liver, ovary, prostate, colon, kidney, pancreas, brain, cerebellum, mammary gland and epididymis. Not expressed in small intestine, spleen, bladder, adrenal gland and testis.

The protein resides in the microsome membrane. It localises to the endoplasmic reticulum membrane. The enzyme catalyses glucuronate acceptor + UDP-alpha-D-glucuronate = acceptor beta-D-glucuronoside + UDP + H(+). Its function is as follows. UDPGT is of major importance in the conjugation and subsequent elimination of potentially toxic xenobiotics and endogenous compounds. This isozyme displays activity toward several classes of xenobiotic substrates: eugenol, 4-methyllumbelliferone, p-nitrophenol, 1-naphthol, p,p'-biphenol, naringenin and o,o'-biphenol. Active also on 3a-hydroxy and 17b-hydroxy positions of steroids. Functionally, contributes to the formation of androgen glucuronide in extrahepatic steroid target tissues such as the prostate. In Macaca fascicularis (Crab-eating macaque), this protein is UDP-glucuronosyltransferase 2B19 (UGT2B19).